The following is a 126-amino-acid chain: Aspartate 1-decarboxylase (126 aa).

The active-site Schiff-base intermediate with substrate; via pyruvic acid is S25. S25 is subject to Pyruvic acid (Ser). T57 contributes to the substrate binding site. Catalysis depends on Y58, which acts as the Proton donor. 72 to 74 (GAA) serves as a coordination point for substrate.

This sequence belongs to the PanD family. Heterooctamer of four alpha and four beta subunits. Pyruvate is required as a cofactor. In terms of processing, is synthesized initially as an inactive proenzyme, which is activated by self-cleavage at a specific serine bond to produce a beta-subunit with a hydroxyl group at its C-terminus and an alpha-subunit with a pyruvoyl group at its N-terminus.

The protein resides in the cytoplasm. The enzyme catalyses L-aspartate + H(+) = beta-alanine + CO2. It functions in the pathway cofactor biosynthesis; (R)-pantothenate biosynthesis; beta-alanine from L-aspartate: step 1/1. In terms of biological role, catalyzes the pyruvoyl-dependent decarboxylation of aspartate to produce beta-alanine. This is Aspartate 1-decarboxylase from Campylobacter jejuni subsp. jejuni serotype O:6 (strain 81116 / NCTC 11828).